The primary structure comprises 374 residues: Flagellar P-ring protein 1 (374 aa).

Positions 1–29 (MPGVRWVRIVGVACAALSALALSVTSASA) are cleaved as a signal peptide.

The protein belongs to the FlgI family. As to quaternary structure, the basal body constitutes a major portion of the flagellar organelle and consists of four rings (L,P,S, and M) mounted on a central rod.

The protein localises to the periplasm. It localises to the bacterial flagellum basal body. Its function is as follows. Assembles around the rod to form the L-ring and probably protects the motor/basal body from shearing forces during rotation. This Bradyrhizobium diazoefficiens (strain JCM 10833 / BCRC 13528 / IAM 13628 / NBRC 14792 / USDA 110) protein is Flagellar P-ring protein 1.